The following is a 204-amino-acid chain: Somatotropin (204 aa).

A signal peptide spans 1-17 (MDRVVLLLSVLSLGVSS). A Pyrrolidone carboxylic acid modification is found at Q18. A Zn(2+)-binding site is contributed by H36. An intrachain disulfide couples C69 to C177. E186 lines the Zn(2+) pocket. An intrachain disulfide couples C194 to C202.

This sequence belongs to the somatotropin/prolactin family.

The protein localises to the secreted. Functionally, growth hormone plays an important role in growth control and is involved in the regulation of several anabolic processes. Implicated as an osmoregulatory substance important for seawater adaptation. This Lates calcarifer (Barramundi) protein is Somatotropin (gh).